Consider the following 1855-residue polypeptide: Collagen alpha-1(XXVII) chain (1855 aa).

Residues 1–48 (MGLARATAGLGPCCPPAPALLGAGLRWGGFLFAWILVSFSCHLASTQG) form the signal peptide. Residues 49 to 618 (APEDVDVLQR…PEPTPFLMLM (570 aa)) constitute a propeptide, N-terminal propeptide. Positions 81–246 (PSGFIFTQRA…NYCAHLRERC (166 aa)) constitute a Laminin G-like domain. N-linked (GlcNAc...) asparagine glycosylation is found at Asn281 and Asn349. Disordered stretches follow at residues 317–428 (DVSK…SATV), 511–580 (PPLG…SQLS), 617–787 (LMGP…GFPG), and 838–1617 (GGVG…HPVQ). Polar residues-rich tracts occupy residues 382–427 (LSVT…SSAT) and 520–532 (MMPS…STPA). Basic and acidic residues predominate over residues 563–573 (TARDASPRDLT). Collagen-like domains follow at residues 619-673 (GPPG…GDPG), 682-741 (GAKG…PGPV), 751-810 (GYIG…PGPP), 826-885 (GYPG…PGPM), 886-945 (GKAG…EGPM), 946-1005 (GPPG…VGEK), 1006-1047 (GDRG…PGSR), 1048-1105 (GLPG…GAKG), 1108-1155 (GIPG…PGLP), 1156-1215 (GDSG…KGQE), 1216-1275 (GLKG…PGTP), 1276-1330 (GPKG…GEDG), and 1334-1393 (GAPG…KGSK). Residues 619–1612 (GPPGSKGDCG…RGRPGPPGPP (994 aa)) are triple-helical region. Pro residues predominate over residues 630–663 (PGPPGLPGLPGSPGPRGPRGPPGPFGNPGLPGPP). Positions 708–728 (PGAAGHPGEQGQPGPEGSPGA) are enriched in low complexity. Residues 905 to 918 (FPGDIGPPGDNGPE) show a composition bias toward low complexity. A compositionally biased stretch (gly residues) spans 1027 to 1036 (GTPGGVGDPG). Low complexity-rich tracts occupy residues 1083–1095 (RGRP…QGAA), 1121–1131 (LPGEPGSQGPQ), and 1161–1176 (KGDL…QGLI). Composition is skewed to basic and acidic residues over residues 1196 to 1221 (LKGD…KGEE), 1320 to 1332 (KGEK…DGKT), and 1344 to 1354 (PVGDRGDRGEP). Composition is skewed to low complexity over residues 1369-1378 (RGEPGQQGQP) and 1404-1431 (KAGA…RQGP). Collagen-like domains are found at residues 1433 to 1492 (GMAG…SGLP), 1493 to 1552 (GQLG…KGIQ), and 1553 to 1612 (GPRG…PGPP). Residues 1566–1581 (IIGPPGMLGPSGLPGP) show a composition bias toward low complexity. The segment covering 1597–1614 (RGPPGPRGRPGPPGPPWH) has biased composition (pro residues). A propeptide spans 1616 to 1855 (VQFQQDDLEA…RLEVGPACFL (240 aa)) (C-terminal propeptide). The Fibrillar collagen NC1 domain occupies 1655-1855 (GEIFKTLHYL…RLEVGPACFL (201 aa)). Cystine bridges form between Cys1685–Cys1717, Cys1726–Cys1853, and Cys1762–Cys1806. Residues Asp1703, Asn1705, Cys1708, and Asp1711 each coordinate Ca(2+). Asn1764 is a glycosylation site (N-linked (GlcNAc...) asparagine).

Belongs to the fibrillar collagen family.

The protein resides in the secreted. The protein localises to the extracellular space. Its subcellular location is the extracellular matrix. Plays a role during the calcification of cartilage and the transition of cartilage to bone. In Rattus norvegicus (Rat), this protein is Collagen alpha-1(XXVII) chain (Col27a1).